The sequence spans 346 residues: fMet-Leu-Phe receptor (346 aa).

2 N-linked (GlcNAc...) asparagine glycosylation sites follow: asparagine 1 and asparagine 7. Over 1 to 24 the chain is Extracellular; that stretch reads NSSLPTNISGGTPAVSAGYLFLDI. The helical transmembrane segment at 25–47 threads the bilayer; the sequence is ITYLVFAVTFVLGVLGNGLVIWV. The Cytoplasmic portion of the chain corresponds to 48–58; the sequence is AGFRMRHTVTT. Residues 59-80 traverse the membrane as a helical segment; it reads ISYLNLAVADFCFTSTLPFLMV. The Extracellular segment spans residues 81–97; sequence VKVMRGHWPFGWFLCKF. Cysteine 95 and cysteine 173 are joined by a disulfide. A helical membrane pass occupies residues 98-118; the sequence is IFTIVDINLFGSVFLIALIAL. Residues 119 to 137 are Cytoplasmic-facing; sequence DRCVCVLHPVWTQNHRTVS. A helical transmembrane segment spans residues 138-159; the sequence is LAKKVIIGPWVMALLLTLPVII. The Extracellular segment spans residues 160 to 202; the sequence is RVTTVPGKTGTVACTFDFSPWTNDPVEKLKVTIAMLTVRGIIR. A helical transmembrane segment spans residues 203-223; the sequence is FIIGFSVPMSIVAVSYGLIAT. The Cytoplasmic segment spans residues 224 to 239; it reads KIHKQGLIKSSRPLRV. Residues 240–263 traverse the membrane as a helical segment; that stretch reads LSFVVAAFFLCWSPYQVVAFIATV. The Extracellular portion of the chain corresponds to 264–282; the sequence is RLRNILQGLSKELRIAVDA. A helical membrane pass occupies residues 283 to 302; it reads TSALAFFNSCLNPMLYVFMG. The Cytoplasmic portion of the chain corresponds to 303–346; that stretch reads QDFRERLIHSLPTSLERALTEDSAQTSDTATNSTLPSAEVPLQA. The segment at 321–346 is disordered; that stretch reads LTEDSAQTSDTATNSTLPSAEVPLQA. The span at 324-338 shows a compositional bias: polar residues; the sequence is DSAQTSDTATNSTLP.

It belongs to the G-protein coupled receptor 1 family. In terms of processing, phosphorylated; which is necessary for desensitization.

The protein localises to the cell membrane. High affinity receptor for N-formyl-methionyl peptides (fMLP), which are powerful neutrophil chemotactic factors. Binding of fMLP to the receptor stimulates intracellular calcium mobilization and superoxide anion release. This response is mediated via a G-protein that activates a phosphatidylinositol-calcium second messenger system. Receptor for TAFA4, mediates its effects on chemoattracting macrophages, promoting phagocytosis and increasing ROS release. Receptor for cathepsin CTSG, leading to increased phagocyte chemotaxis. The chain is fMet-Leu-Phe receptor (FPR1) from Macaca mulatta (Rhesus macaque).